A 206-amino-acid chain; its full sequence is Small ribosomal subunit protein uS4 (206 aa).

Positions 98–163 constitute an S4 RNA-binding domain; it reads MRLDNIVYRL…SEKFKTFVEN (66 aa).

Belongs to the universal ribosomal protein uS4 family. In terms of assembly, part of the 30S ribosomal subunit. Contacts protein S5. The interaction surface between S4 and S5 is involved in control of translational fidelity.

Its function is as follows. One of the primary rRNA binding proteins, it binds directly to 16S rRNA where it nucleates assembly of the body of the 30S subunit. With S5 and S12 plays an important role in translational accuracy. The polypeptide is Small ribosomal subunit protein uS4 (Clostridium beijerinckii (strain ATCC 51743 / NCIMB 8052) (Clostridium acetobutylicum)).